A 589-amino-acid chain; its full sequence is MNNRKEDMEITSHYRHLLRELNEQRQHGVLCDVCVVVEGKVFKAHKNVLLGSSRYFKTLYCQVQKTSEQATVTHLDIVTAQGFKAIIDFMYSAHLALTSRNVIEVMSAASFLQMTDIVQACHDFIKAALDISIKSDASDELAEFEIGASSSSSTEALISAVMAGRSISPWLARRTSPANSSGDSAIASCHDGGSSYGKEDQEPKADGPDDVSSQPLWPGDVGYGPLRIKEEQVSPSQYGGSELPSAKDGAVQNSFSEQSAGDAWQPTGRRKNRKNKETVRHITQQVEDDSRASSPVPSFLPTSGWPFSSRDSNADLSVTEASSSDSRGERAELYAQVEEGLLGGEASYLGPPLTPEKDDALHQATAVANLRAALMSKNSLLSLKADVLGDDGSLLFEYLPRGAHSLSLNEFTVIRKKFKCPYCSFSAMHQCILKRHMRSHTGERPYPCEICGKKFTRREHMKRHTLVHSKDKKYVCKVCSRVFMSAASVGIRHGSRRHGVCTDCAGRGMAGPLDHGGGGGEGSPEALFPGDGPYLEDPEDPRGEAEELGEDDEGLAPEDALLADDKDEEDSPRPRSPPGGPDKDFAWLS.

Positions 31-99 (CDVCVVVEGK…MYSAHLALTS (69 aa)) constitute a BTB domain. The disordered stretch occupies residues 173 to 330 (RRTSPANSSG…ASSSDSRGER (158 aa)). Positions 197-207 (GKEDQEPKADG) are enriched in basic and acidic residues. Residue K229 forms a Glycyl lysine isopeptide (Lys-Gly) (interchain with G-Cter in SUMO2) linkage. S234 bears the Phosphoserine mark. Over residues 305 to 325 (WPFSSRDSNADLSVTEASSSD) the composition is skewed to polar residues. 2 consecutive C2H2-type zinc fingers follow at residues 418 to 436 (FKCP…LKRH) and 446 to 468 (YPCE…TLVH). The tract at residues 512 to 589 (PLDHGGGGGE…GPDKDFAWLS (78 aa)) is disordered. Positions 546-570 (EELGEDDEGLAPEDALLADDKDEED) are enriched in acidic residues.

In terms of processing, sumoylated. Desumoylation by DESI1 reverses transcriptional repression activity.

The protein resides in the nucleus. Its function is as follows. Functions as a transcriptional repressor for PRDM1. This Homo sapiens (Human) protein is Zinc finger and BTB domain-containing protein 46 (ZBTB46).